The chain runs to 122 residues: Large ribosomal subunit protein uL14 (122 aa).

Belongs to the universal ribosomal protein uL14 family. As to quaternary structure, part of the 50S ribosomal subunit. Forms a cluster with proteins L3 and L19. In the 70S ribosome, L14 and L19 interact and together make contacts with the 16S rRNA in bridges B5 and B8.

Binds to 23S rRNA. Forms part of two intersubunit bridges in the 70S ribosome. The polypeptide is Large ribosomal subunit protein uL14 (Methylobacterium sp. (strain 4-46)).